A 194-amino-acid polypeptide reads, in one-letter code: Holliday junction branch migration complex subunit RuvA (194 aa).

The segment at 1–64 (MISRLTGKLV…EDAHLLFGFA (64 aa)) is domain I. The interval 65-143 (TAEERKTFRQ…AHTVTDGLFA (79 aa)) is domain II. The interval 144–147 (ASPA) is flexible linker. Residues 147-194 (AADETEDIVSTLLALGYNEREAKAAVKGVPKGTDVGEGVRLALKNLLK) form a domain III region.

This sequence belongs to the RuvA family. Homotetramer. Forms an RuvA(8)-RuvB(12)-Holliday junction (HJ) complex. HJ DNA is sandwiched between 2 RuvA tetramers; dsDNA enters through RuvA and exits via RuvB. An RuvB hexamer assembles on each DNA strand where it exits the tetramer. Each RuvB hexamer is contacted by two RuvA subunits (via domain III) on 2 adjacent RuvB subunits; this complex drives branch migration. In the full resolvosome a probable DNA-RuvA(4)-RuvB(12)-RuvC(2) complex forms which resolves the HJ.

The protein localises to the cytoplasm. Functionally, the RuvA-RuvB-RuvC complex processes Holliday junction (HJ) DNA during genetic recombination and DNA repair, while the RuvA-RuvB complex plays an important role in the rescue of blocked DNA replication forks via replication fork reversal (RFR). RuvA specifically binds to HJ cruciform DNA, conferring on it an open structure. The RuvB hexamer acts as an ATP-dependent pump, pulling dsDNA into and through the RuvAB complex. HJ branch migration allows RuvC to scan DNA until it finds its consensus sequence, where it cleaves and resolves the cruciform DNA. This is Holliday junction branch migration complex subunit RuvA from Neisseria gonorrhoeae (strain ATCC 700825 / FA 1090).